The primary structure comprises 63 residues: Anionic peptide NDBP7 (63 aa).

Positions 1–20 (MISRFCLLFLLVFVVSKIQA) are cleaved as a signal peptide.

Belongs to the non-disulfide-bridged peptide (NDBP) superfamily. Long chain multifunctional peptide (group 2) family. Expressed by the venom gland.

Its subcellular location is the secreted. The chain is Anionic peptide NDBP7 from Lychas mucronatus (Chinese swimming scorpion).